A 253-amino-acid chain; its full sequence is Tropomyosin-1 (253 aa).

Residues 7 to 253 (VNKLVRLQGK…MDDVGDDDTQ (247 aa)) adopt a coiled-coil conformation.

Belongs to the tropomyosin family. As to quaternary structure, homodimer.

Its function is as follows. Tropomyosin, in association with the troponin complex, plays a central role in the calcium dependent regulation of muscle contraction. This is Tropomyosin-1 (TROP1) from Hydra vulgaris (Hydra).